Here is a 493-residue protein sequence, read N- to C-terminus: Calcium-binding tyrosine phosphorylation-regulated protein (493 aa).

The 38-residue stretch at 12-49 (YGLKTLLEGISRAVLKTNPSNINQFAAAYFQELTMYRG) folds into the RIIa domain. 4 disordered regions span residues 85–164 (EPGK…VSPE), 244–271 (DLGS…QEPP), 330–354 (NEQS…TTSG), and 426–493 (IVSD…STAE). Polar residues predominate over residues 90–100 (SVESKVPTQME). Residues 101–117 (KSTDTDEDNVTRTEYSD) show a composition bias toward basic and acidic residues. Over residues 141-152 (SSKPATPKTTTP) the composition is skewed to low complexity. T151 carries the post-translational modification Phosphothreonine. At S155 the chain carries Phosphoserine. Polar residues-rich tracts occupy residues 426–442 (IVSD…NSVP) and 461–470 (SGTSVKSSSG). Acidic residues predominate over residues 484 to 493 (IEPEGESTAE).

As to quaternary structure, interacts with FSCB. Isoform 3 self-associates. Isoform 3 and isoform 5 interact with GSK3B. Isoform 1 does not interact with GSK3B. In terms of processing, isoform 1 is phosphorylated on tyrosine residues during in vitro capacitation. Isoform 3 and isoform 5 are phosphorylated by GSK3B in vitro. Dephosphorylation affects its ability to bind calcium. As to expression, expressed in elongating spermatids and spermatozoa (at protein level). Isoform 1 is expressed in testis. Isoform 3 and isoform 5 are also expressed in brain, pancreas and numerous brain tumors.

It is found in the cytoplasm. The protein resides in the cytoskeleton. Its subcellular location is the cell projection. The protein localises to the cilium. It localises to the flagellum. It is found in the nucleus. Functionally, may function as a regulator of both motility- and head-associated functions such as capacitation and the acrosome reaction. Isoform 1 binds calcium in vitro. Isoform 2 and isoform 6 probably bind calcium. Isoform 3 and isoform 5 do not bind calcium in vitro. Isoform 4 probably does not bind calcium. The polypeptide is Calcium-binding tyrosine phosphorylation-regulated protein (CABYR) (Homo sapiens (Human)).